The following is a 585-amino-acid chain: Protein cereblon (585 aa).

Disordered regions lie at residues 1–109 (MDEE…DLES) and 156–195 (FSQERRRSRTSEETSQEAAEQPVDPPPQQPPRPPIDIGFD). The span at 80 to 95 (QDDTASEGSHPSSDMS) shows a compositional bias: polar residues. The segment covering 158 to 167 (QERRRSRTSE) has biased composition (basic and acidic residues). Over residues 178 to 189 (VDPPPQQPPRPP) the composition is skewed to pro residues. The region spanning 225-451 (HMLIFLHQHI…LIKSTFKDET (227 aa)) is the Lon N-terminal domain. The 110-residue stretch at 450–559 (ETLFFCRYCN…LAGSSVRIGK (110 aa)) folds into the CULT domain. The Zn(2+) site is built by cysteine 455, cysteine 458, cysteine 524, and cysteine 527.

This sequence belongs to the CRBN family. In terms of assembly, likely a component of a DCX (DDB1-CUL4-X-box) protein ligase complex. May interact with pic/DDB1. Ubiquitinated. As to expression, expressed in the fat body (at protein level).

It is found in the nucleus. It functions in the pathway protein modification; protein ubiquitination. Functionally, substrate recognition component of a DCX (DDB1-CUL4-X-box) E3 protein ligase complex that mediates the ubiquitination and subsequent proteasomal degradation of target proteins. Has an essential role in mediating growth by negatively regulating insulin signaling. It also has a role in maintaining presynaptic function in the neuromuscular junction synapses of third-instar larvae. The sequence is that of Protein cereblon from Drosophila melanogaster (Fruit fly).